Here is a 395-residue protein sequence, read N- to C-terminus: uncharacterized protein (395 aa).

A coiled-coil region spans residues 182 to 238 (KKLEDILSTIAEIEDSIELEKILSLDQFLKSKLSNIKITNNQIDEAKAEFKEMFNKK).

This is an uncharacterized protein from Acanthamoeba polyphaga (Amoeba).